The sequence spans 419 residues: 3-isopropylmalate dehydratase large subunit (419 aa).

[4Fe-4S] cluster contacts are provided by Cys300, Cys360, and Cys363.

This sequence belongs to the aconitase/IPM isomerase family. LeuC type 2 subfamily. Heterodimer of LeuC and LeuD. [4Fe-4S] cluster serves as cofactor.

It catalyses the reaction (2R,3S)-3-isopropylmalate = (2S)-2-isopropylmalate. It participates in amino-acid biosynthesis; L-leucine biosynthesis; L-leucine from 3-methyl-2-oxobutanoate: step 2/4. Catalyzes the isomerization between 2-isopropylmalate and 3-isopropylmalate, via the formation of 2-isopropylmaleate. In Desulfatibacillum aliphaticivorans, this protein is 3-isopropylmalate dehydratase large subunit.